A 396-amino-acid polypeptide reads, in one-letter code: Probable arginine kinase F46H5.3 (396 aa).

The Phosphagen kinase N-terminal domain maps to 47 to 129; that stretch reads KIEEGYAKLQ…FDPLIQDYHN (83 aa). Residue 102–106 coordinates substrate; it reads GVGVY. Residues 159 to 396 form the Phosphagen kinase C-terminal domain; that stretch reads FINSTRIRCG…AHLIALEKAA (238 aa). ATP-binding positions include 162–166 and H226; that span reads STRIR. E266 is a substrate binding site. R270 serves as a coordination point for ATP. Residue C312 participates in substrate binding. Residues 321-325, 349-354, and D364 contribute to the ATP site; these read RASVH and RGIHGE. Residue E354 coordinates substrate.

The protein belongs to the ATP:guanido phosphotransferase family.

The enzyme catalyses L-arginine + ATP = N(omega)-phospho-L-arginine + ADP + H(+). The sequence is that of Probable arginine kinase F46H5.3 from Caenorhabditis elegans.